We begin with the raw amino-acid sequence, 350 residues long: Enoyl-[acyl-carrier-protein] reductase, mitochondrial (350 aa).

A mitochondrion-targeting transit peptide spans 1 to 12; it reads MWLGLRLFHRPF. Tyrosine 68 acts as the Proton donor in catalysis. NADP(+) contacts are provided by residues asparagine 141, 167–170, 190–192, 259–262, 284–286, and lysine 345; these read NSGV, RDR, YGGM, and FWV.

The protein belongs to the zinc-containing alcohol dehydrogenase family. Quinone oxidoreductase subfamily. Homodimer. As to expression, expressed in the developing pronephros.

The protein resides in the mitochondrion. The enzyme catalyses a 2,3-saturated acyl-[ACP] + NADP(+) = a (2E)-enoyl-[ACP] + NADPH + H(+). Catalyzes the NADPH-dependent reduction of trans-2-enoyl thioesters in mitochondrial fatty acid synthesis (fatty acid synthesis type II). Fatty acid chain elongation in mitochondria uses acyl carrier protein (ACP) as an acyl group carrier, but the enzyme accepts both ACP and CoA thioesters as substrates in vitro. May provide the octanoyl chain used for lipoic acid biosynthesis, regulating protein lipoylation and mitochondrial respiratory activity. Involved in iron homeostasis; affecting Fe-S cluster assembly and ceramide metabolism. Required for proper morphology and bioenergetic functions of mitochondria. Required for maintenance of neurons. Functions in pronephros development, regulating late differentiation of all pronephric tubule segments. In Xenopus tropicalis (Western clawed frog), this protein is Enoyl-[acyl-carrier-protein] reductase, mitochondrial (mecr).